Reading from the N-terminus, the 362-residue chain is Erythritol/L-threitol dehydrogenase (362 aa).

Residues Cys-45, His-76, Glu-77, Cys-109, Cys-112, Cys-115, and Cys-123 each contribute to the Zn(2+) site. 2 residues coordinate NAD(+): Ile-195 and Asp-215.

Belongs to the zinc-containing alcohol dehydrogenase family. It depends on Zn(2+) as a cofactor.

It carries out the reaction erythritol + NAD(+) = D-erythrulose + NADH + H(+). The enzyme catalyses L-threitol + NAD(+) = L-erythrulose + NADH + H(+). Its pathway is carbohydrate metabolism; erythritol degradation. It functions in the pathway carbohydrate metabolism; L-threitol degradation. In terms of biological role, catalyzes the NAD-dependent reversible oxidation of erythritol and L-threitol. Involved in the degradation pathways of erythritol and L-threitol, that allow M.smegmatis to grow on these compounds as the sole carbon source. This Mycolicibacterium smegmatis (strain ATCC 700084 / mc(2)155) (Mycobacterium smegmatis) protein is Erythritol/L-threitol dehydrogenase.